The following is a 540-amino-acid chain: Methionine--tRNA ligase 1 (540 aa).

Residues 10-20 carry the 'HIGH' region motif; it reads PYANGSLHLGH. 4 residues coordinate Zn(2+): Cys-141, Cys-144, Cys-153, and Cys-156. The 'KMSKS' region motif lies at 327–331; sequence KISTS. An ATP-binding site is contributed by Thr-330.

The protein belongs to the class-I aminoacyl-tRNA synthetase family. MetG type 1 subfamily. In terms of assembly, monomer. Requires Zn(2+) as cofactor.

The protein localises to the cytoplasm. The catalysed reaction is tRNA(Met) + L-methionine + ATP = L-methionyl-tRNA(Met) + AMP + diphosphate. In terms of biological role, is required not only for elongation of protein synthesis but also for the initiation of all mRNA translation through initiator tRNA(fMet) aminoacylation. The chain is Methionine--tRNA ligase 1 from Alkaliphilus oremlandii (strain OhILAs) (Clostridium oremlandii (strain OhILAs)).